The sequence spans 337 residues: Glyceraldehyde-3-phosphate dehydrogenase (337 aa).

NAD(+) is bound by residues 11–12 (TI) and glycine 111. 140-142 (SCN) contributes to the D-glyceraldehyde 3-phosphate binding site. The active-site Nucleophile is cysteine 141. Residue arginine 169 coordinates NAD(+). Positions 177 to 196 (KKGPINSIVPTTEVPSHHGP) are disordered. Residue 194-195 (HG) coordinates D-glyceraldehyde 3-phosphate. Glutamine 301 lines the NAD(+) pocket.

It belongs to the glyceraldehyde-3-phosphate dehydrogenase family. In terms of assembly, homotetramer.

The protein resides in the cytoplasm. It carries out the reaction D-glyceraldehyde 3-phosphate + phosphate + NADP(+) = (2R)-3-phospho-glyceroyl phosphate + NADPH + H(+). It catalyses the reaction D-glyceraldehyde 3-phosphate + phosphate + NAD(+) = (2R)-3-phospho-glyceroyl phosphate + NADH + H(+). The protein operates within carbohydrate degradation; glycolysis; pyruvate from D-glyceraldehyde 3-phosphate: step 1/5. This is Glyceraldehyde-3-phosphate dehydrogenase from Methanosphaera stadtmanae (strain ATCC 43021 / DSM 3091 / JCM 11832 / MCB-3).